The primary structure comprises 380 residues: Guanine nucleotide-binding protein subunit beta (380 aa).

WD repeat units follow at residues 64 to 103 (GHSG…KTHA), 106 to 145 (LHCP…DRDG), 155 to 195 (GHKG…RISI), 203 to 243 (GHTA…RAVR), 247 to 286 (GHEG…QLQV), 296 to 335 (NELP…VVLN), and 342 to 380 (SHEG…RKIV).

Belongs to the WD repeat G protein beta family. As to quaternary structure, g proteins are composed of 3 units, alpha, beta and gamma. Interacts with the gamma subunits RGG1 and RGG2.

Its subcellular location is the cell membrane. Its function is as follows. Guanine nucleotide-binding proteins (G proteins) are involved as modulators or transducers in various transmembrane signaling systems. The beta and gamma chains are required for the GTPase activity, for replacement of GDP by GTP, and for G protein-effector interaction. This Oryza sativa subsp. indica (Rice) protein is Guanine nucleotide-binding protein subunit beta.